The following is a 323-amino-acid chain: Aldo-keto reductase family 1 member C13 (323 aa).

NAD(+) contacts are provided by residues 20–24 (GFGTY), aspartate 50, and tyrosine 55. Tyrosine 55 (proton donor) is an active-site residue. Histidine 117 is a substrate binding site. Residues 166–167 (SN), glutamine 190, 216–224 (YGALGTQRY), and 270–280 (QSFKENEMREN) each bind NAD(+).

This sequence belongs to the aldo/keto reductase family.

Catalyzes the dehydrogenation of 17-beta-hydroxysteroids. May also exhibit significant activity with a variety of cyclic and alicyclic alcohols. Uses both NAD and NADP, but the activity is much greater with NAD than with NADP. In Mus musculus (Mouse), this protein is Aldo-keto reductase family 1 member C13 (Akr1c13).